We begin with the raw amino-acid sequence, 164 residues long: ATP synthase subunit b (164 aa).

The chain crosses the membrane as a helical span at residues 6–26 (GELIGNFILITGSFILLLVLI).

It belongs to the ATPase B chain family. In terms of assembly, F-type ATPases have 2 components, F(1) - the catalytic core - and F(0) - the membrane proton channel. F(1) has five subunits: alpha(3), beta(3), gamma(1), delta(1), epsilon(1). F(0) has three main subunits: a(1), b(2) and c(10-14). The alpha and beta chains form an alternating ring which encloses part of the gamma chain. F(1) is attached to F(0) by a central stalk formed by the gamma and epsilon chains, while a peripheral stalk is formed by the delta and b chains.

It localises to the cell membrane. In terms of biological role, f(1)F(0) ATP synthase produces ATP from ADP in the presence of a proton or sodium gradient. F-type ATPases consist of two structural domains, F(1) containing the extramembraneous catalytic core and F(0) containing the membrane proton channel, linked together by a central stalk and a peripheral stalk. During catalysis, ATP synthesis in the catalytic domain of F(1) is coupled via a rotary mechanism of the central stalk subunits to proton translocation. Its function is as follows. Component of the F(0) channel, it forms part of the peripheral stalk, linking F(1) to F(0). The sequence is that of ATP synthase subunit b from Streptococcus pneumoniae serotype 2 (strain D39 / NCTC 7466).